The primary structure comprises 190 residues: Inosine triphosphate pyrophosphatase (190 aa).

Residue 9 to 14 (TGNAKK) participates in ITP binding. Residue E39 coordinates Mg(2+). ITP contacts are provided by residues K51, 67–68 (DT), K84, 144–147 (FGWD), K167, and 172–173 (HR).

Belongs to the HAM1 NTPase family. In terms of assembly, homodimer. It depends on Mg(2+) as a cofactor. Mn(2+) serves as cofactor.

Its subcellular location is the cytoplasm. The enzyme catalyses ITP + H2O = IMP + diphosphate + H(+). It catalyses the reaction dITP + H2O = dIMP + diphosphate + H(+). The catalysed reaction is XTP + H2O = XMP + diphosphate + H(+). Its function is as follows. Pyrophosphatase that hydrolyzes non-canonical purine nucleotides such as inosine triphosphate (ITP), deoxyinosine triphosphate (dITP) or xanthosine 5'-triphosphate (XTP) to their respective monophosphate derivatives. The enzyme does not distinguish between the deoxy- and ribose forms. Probably excludes non-canonical purines from RNA and DNA precursor pools, thus preventing their incorporation into RNA and DNA and avoiding chromosomal lesions. The chain is Inosine triphosphate pyrophosphatase from Pediculus humanus subsp. corporis (Body louse).